Consider the following 541-residue polypeptide: Glucose-6-phosphate isomerase (541 aa).

The active-site Proton donor is Glu346. Active-site residues include His377 and Lys506.

This sequence belongs to the GPI family.

The protein resides in the cytoplasm. The catalysed reaction is alpha-D-glucose 6-phosphate = beta-D-fructose 6-phosphate. The protein operates within carbohydrate biosynthesis; gluconeogenesis. Its pathway is carbohydrate degradation; glycolysis; D-glyceraldehyde 3-phosphate and glycerone phosphate from D-glucose: step 2/4. In terms of biological role, catalyzes the reversible isomerization of glucose-6-phosphate to fructose-6-phosphate. This Sinorhizobium medicae (strain WSM419) (Ensifer medicae) protein is Glucose-6-phosphate isomerase.